The sequence spans 223 residues: N-(5'-phosphoribosyl)anthranilate isomerase (223 aa).

This sequence belongs to the TrpF family.

It catalyses the reaction N-(5-phospho-beta-D-ribosyl)anthranilate = 1-(2-carboxyphenylamino)-1-deoxy-D-ribulose 5-phosphate. The protein operates within amino-acid biosynthesis; L-tryptophan biosynthesis; L-tryptophan from chorismate: step 3/5. This chain is N-(5'-phosphoribosyl)anthranilate isomerase, found in Moorella thermoacetica (strain ATCC 39073 / JCM 9320).